Consider the following 59-residue polypeptide: U-myrmeciitoxin(01)-Mg5a (59 aa).

The first 21 residues, 1-21 (MRLSYLSLALAIIFVLTIMHA), serve as a signal peptide directing secretion. A propeptide spanning residues 22-38 (SNVEAKASADPEPDAVG) is cleaved from the precursor.

Expressed by the venom gland.

The protein resides in the secreted. May have antimicrobial properties, like most ant linear peptides. The protein is U-myrmeciitoxin(01)-Mg5a of Myrmecia gulosa (Red bulldog ant).